The sequence spans 310 residues: MKNLPIKIVSTGRYAPDNIMTNDDFSKILDTNDEWITTRTGIKRRHIAQGETAIDMAYKAALKAVENKNYDKEKIDLIIVASITSPVKTPSIANLIQAKLGLNHKNIVAFDINAACSGFVYAVEIAASMISSGNYKSALVIGSEHMSSILDWEDRSTAILFGDAAGAAIIEVSDNPKDNAYFWNGSRGDDTGILWIDPKVKMAGREVYKFAVDIMPKAIHKVLEKAGLTIDDIDYIIPHQANYRIIQSVAKDMNLPIERFLMNLEEYGNTSAASIPFLLDEHKTNNPEVKRVILVGFGGGFTWGAAILNV.

Residues C116 and H239 contribute to the active site. The segment at 240-244 (QANYR) is ACP-binding. N269 is a catalytic residue.

Belongs to the thiolase-like superfamily. FabH family. Homodimer.

Its subcellular location is the cytoplasm. The catalysed reaction is malonyl-[ACP] + acetyl-CoA + H(+) = 3-oxobutanoyl-[ACP] + CO2 + CoA. The protein operates within lipid metabolism; fatty acid biosynthesis. Functionally, catalyzes the condensation reaction of fatty acid synthesis by the addition to an acyl acceptor of two carbons from malonyl-ACP. Catalyzes the first condensation reaction which initiates fatty acid synthesis and may therefore play a role in governing the total rate of fatty acid production. Possesses both acetoacetyl-ACP synthase and acetyl transacylase activities. Its substrate specificity determines the biosynthesis of branched-chain and/or straight-chain of fatty acids. The protein is Beta-ketoacyl-[acyl-carrier-protein] synthase III of Acholeplasma laidlawii (strain PG-8A).